Here is a 1055-residue protein sequence, read N- to C-terminus: Auxin response factor 16 (1055 aa).

Positions 127–229 (FCKTLTASDT…QLLLGIRRAT (103 aa)) form a DNA-binding region, TF-B3. 5 disordered regions span residues 485–510 (PVMS…QQSS), 532–565 (QEHL…EQTS), 585–609 (SQLQ…PIAG), 701–720 (SDSI…LNHM), and 732–769 (SHSA…SRNL). 2 stretches are compositionally biased toward low complexity: residues 488–510 (SQHQ…QQSS) and 532–552 (QEHL…ASSL). The segment covering 742–756 (PSSSTAPSTSRISPI) has biased composition (low complexity). Over residues 757–769 (NSLSRANQGSRNL) the composition is skewed to polar residues. In terms of domain architecture, PB1 spans 940–1024 (RTFTKVQKRG…KSIKILSAAE (85 aa)). The tract at residues 1034-1055 (LGGVPPQTQACSASDDANAWRG) is disordered.

It belongs to the ARF family. As to quaternary structure, homodimers and heterodimers. Expressed in roots, culms, leaves and young panicles.

Its subcellular location is the nucleus. In terms of biological role, auxin response factors (ARFs) are transcriptional factors that bind specifically to the DNA sequence 5'-TGTCTC-3' found in the auxin-responsive promoter elements (AuxREs). This is Auxin response factor 16 (ARF16) from Oryza sativa subsp. japonica (Rice).